The following is a 327-amino-acid chain: MPALLERPKLSNAMARALHRHIMMERERKRQEEEEVDKMMEQKMKEEQERRKKKEMEERMSLEETKEQILKLEEKLLALQEEKHQLFLQLKKVLHEEEKRRRKEQSDLTTLTSAAYQQSLTVHTGTHLLSMQGSPGGHNRPGTLMAADRAKQMFGPQVLTTRHYVGSAAAFAGTPEHGQFQGSPGGAYGTAQPPPHYGPTQPAYSPSQQLRAPSAFPAVQYLSQPQPQPYAVHGHFQPTQTGFLQPGGALSLQKQMEHANQQTGFSDSSSLRPMHPQALHPAPGLLASPQLPVQMQPAGKSGFAATSQPGPRLPFIQHSQNPRFYHK.

Residues 14–109 adopt a coiled-coil conformation; sequence MARALHRHIM…RRRKEQSDLT (96 aa). Positions 26–65 are disordered; that stretch reads RERKRQEEEEVDKMMEQKMKEEQERRKKKEMEERMSLEET. Residues lysine 45 and lysine 71 each participate in a glycyl lysine isopeptide (Lys-Gly) (interchain with G-Cter in SUMO1) cross-link. An interaction with SUMO region spans residues 61–94; the sequence is SLEETKEQILKLEEKLLALQEEKHQLFLQLKKVL. Disordered stretches follow at residues 177-208 and 253-327; these read HGQFQGSPGGAYGTAQPPPHYGPTQPAYSPSQ and QKQM…FYHK. Polar residues predominate over residues 253 to 271; that stretch reads QKQMEHANQQTGFSDSSSL. Residue arginine 312 is modified to Asymmetric dimethylarginine. Residues 317-327 show a composition bias toward polar residues; the sequence is QHSQNPRFYHK. Residue arginine 323 is modified to Asymmetric dimethylarginine; alternate. Arginine 323 is modified (omega-N-methylarginine; alternate).

As to quaternary structure, component of the N-Cor repressor complex, at least composed of NCOR1, NCOR2, HDAC3, TBL1X, TBL1R, CORO2A and GPS2. Interacts (when sumoylated at Lys-71) with TBL1X; leading to protect GPS2 from degradation by the proteasome. Interacts with UBE2N; leading to inhibit UBE2N/Ubc13 activity. Interacts with TRAF1. Interacts with TRAF2. Interacts with TRAF6. Interacts with PPARG (when in the liganded conformation). Interacts with (sumoylated) NR1H2; interaction with sumoylated NR1H2 and NR5A2 onto hepatic acute phase protein promoters prevents N-Cor corepressor complex dissociation. Interacts with (sumoylated) NR5A2; interaction with sumoylated NR1H2 and NR5A2 onto hepatic acute phase protein promoters prevents N-Cor corepressor complex dissociation. Interacts with NR1H3. Interacts with RFX4. Interacts with ANKRD26. In terms of assembly, (Microbial infection) Interacts (via coiled coil domain) with hepatitis C virus (HCV) NS5A. In terms of processing, sumoylation regulates its subcellular location. Sumoylation at Lys-45 and Lys-71 regulates the shuttling between the cytoplasm and the nucleus. Sumoylation at Lys-71 is required for interaction with TBL1X. Sumoylated at Lys-45 and Lys-71 in mitochondrion. Desumoylation by SENP1 leads to relocation from the mitochondria to the nucleus. Ubiquitinated at the C-terminus by SIAH2; leading to its degradation by the proteasome. Interaction with TBL1X and methylation at Arg-323 protect GPS2 against ubiquitination and degradation. Post-translationally, methylated at Arg-312 and Arg-323 by PRMT6. Methylation at Arg-323 protects from degradation by the proteasome. Widely expressed.

It is found in the nucleus. The protein localises to the mitochondrion. Its subcellular location is the cytoplasm. It localises to the cytosol. In terms of biological role, key regulator of inflammation, lipid metabolism and mitochondrion homeostasis that acts by inhibiting the activity of the ubiquitin-conjugating enzyme UBE2N/Ubc13, thereby inhibiting 'Lys-63'-linked ubiquitination. In the nucleus, can both acts as a corepressor and coactivator of transcription, depending on the context. Acts as a transcription coactivator in adipocytes by promoting the recruitment of PPARG to promoters: acts by inhibiting the activity of the ubiquitin-conjugating enzyme UBE2N/Ubc13, leading to stabilization of KDM4A and subsequent histone H3 'Lys-9' (H3K9) demethylation. Promotes cholesterol efflux by acting as a transcription coactivator. Acts as a regulator of B-cell development by inhibiting UBE2N/Ubc13, thereby restricting the activation of Toll-like receptors (TLRs) and B-cell antigen receptors (BCRs) signaling pathways. Acts as a key mediator of mitochondrial stress response: in response to mitochondrial depolarization, relocates from the mitochondria to the nucleus following desumoylation and specifically promotes expression of nuclear-encoded mitochondrial genes. Promotes transcription of nuclear-encoded mitochondrial genes by inhibiting UBE2N/Ubc13. Can also act as a corepressor as part of the N-Cor repressor complex by repressing active PPARG. Plays an anti-inflammatory role in macrophages and is required for insulin sensitivity by acting as a corepressor. Plays an anti-inflammatory role during the hepatic acute phase response by interacting with sumoylated NR1H2 and NR5A2 proteins, thereby preventing N-Cor corepressor complex dissociation. In the cytosol, also plays a non-transcriptional role by regulating insulin signaling and pro-inflammatory pathways. In the cytoplasm, acts as a negative regulator of inflammation by inhibiting the pro-inflammatory TNF-alpha pathway; acts by repressing UBE2N/Ubc13 activity. In the cytoplasm of adipocytes, restricts the activation of insulin signaling via inhibition of UBE2N/Ubc13-mediated ubiquitination of AKT. Able to suppress G-protein- and mitogen-activated protein kinase-mediated signal transduction. Acts as a tumor-suppressor in liposarcoma. Its function is as follows. (Microbial infection) Required for efficient replication of hepatitis C virus (HCV) by promoting the interaction between VAPA and HCV virus protein NS5A. The protein is G protein pathway suppressor 2 of Homo sapiens (Human).